The sequence spans 172 residues: Ribosome maturation factor RimM (172 aa).

One can recognise a PRC barrel domain in the interval Glu-96–Leu-168.

Belongs to the RimM family. In terms of assembly, binds ribosomal protein uS19.

It is found in the cytoplasm. Its function is as follows. An accessory protein needed during the final step in the assembly of 30S ribosomal subunit, possibly for assembly of the head region. Essential for efficient processing of 16S rRNA. May be needed both before and after RbfA during the maturation of 16S rRNA. It has affinity for free ribosomal 30S subunits but not for 70S ribosomes. The chain is Ribosome maturation factor RimM from Streptococcus pyogenes serotype M3 (strain ATCC BAA-595 / MGAS315).